A 337-amino-acid chain; its full sequence is uncharacterized protein (337 aa).

2 helical membrane-spanning segments follow: residues Phe-4–Ile-24 and Leu-26–Leu-46.

It belongs to the plectrovirus ORF2 family.

The protein localises to the host membrane. This is an uncharacterized protein from Spiroplasma virus SpV1-R8A2 B (SpV1).